Here is a 286-residue protein sequence, read N- to C-terminus: Acetylglutamate kinase (286 aa).

Substrate-binding positions include 63-64 (GG), Arg-85, and Asn-178.

It belongs to the acetylglutamate kinase family. ArgB subfamily.

The protein resides in the cytoplasm. The enzyme catalyses N-acetyl-L-glutamate + ATP = N-acetyl-L-glutamyl 5-phosphate + ADP. It participates in amino-acid biosynthesis; L-arginine biosynthesis; N(2)-acetyl-L-ornithine from L-glutamate: step 2/4. Catalyzes the ATP-dependent phosphorylation of N-acetyl-L-glutamate. This chain is Acetylglutamate kinase, found in Clostridioides difficile (strain 630) (Peptoclostridium difficile).